The primary structure comprises 271 residues: Aquaporin-1 (271 aa).

Residues 1–11 (MASEFKKKIFW) lie on the Cytoplasmic side of the membrane. A helical membrane pass occupies residues 12-29 (RAVVAEFLAMTLFIFISI). The Extracellular portion of the chain corresponds to 30–48 (GSALGFQYPVRNNQTSGAA). N-linked (GlcNAc...) asparagine glycosylation is present at Asn42. Residues 49–67 (QDNVKVSLAFGLSIATLAQ) form a helical membrane-spanning segment. The Cytoplasmic segment spans residues 68-70 (SVG). The stretch at 71 to 84 (HISGAHLNPAVTLG) is an intramembrane region. The NPA 1 motif lies at 78–80 (NPA). The Cytoplasmic segment spans residues 85-92 (LLLSCQIS). A helical membrane pass occupies residues 93–111 (VLRAVMYIIAQCVGAIVAT). Over 112 to 135 (AILSGITSSLPGNSLGLNSLAPGV) the chain is Extracellular. The helical transmembrane segment at 136–155 (DSGQGLGIEIIGTLQLVLCV) threads the bilayer. Residues 156 to 165 (LATTDRRRRD) are Cytoplasmic-facing. A helical membrane pass occupies residues 166-183 (LGGSAPLAIGFSVALGHL). The Extracellular portion of the chain corresponds to 184 to 188 (LAIDY). The stretch at 189 to 201 (TGCGINPARSFGS) is an intramembrane region. The NPA 2 signature appears at 194 to 196 (NPA). The Extracellular portion of the chain corresponds to 202–208 (AVITHNF). Residues 209-226 (QDHWVFWVGPFIGGALAV) form a helical membrane-spanning segment. Topologically, residues 227 to 271 (LIYDFILAPRSSDLTDRVKVWTSGQVEEYDLDGDDINSRVEMKPK) are cytoplasmic. The residue at position 249 (Ser249) is a Phosphoserine. Position 255 is a phosphotyrosine (Tyr255). Ser264 is subject to Phosphoserine.

Belongs to the MIP/aquaporin (TC 1.A.8) family. As to quaternary structure, homotetramer; each monomer provides an independent water pore. Component of the ankyrin-1 complex in the erythrocyte, composed of ANK1, RHCE, RHAG, SLC4A1, EPB42, GYPA, GYPB and AQP1. Interacts with EPHB2; involved in endolymph production in the inner ear. Identified in a complex with STOM. Interacts (via the N-terminal) with ANK1 (via ANK 1-5 repeats). Interacts (via the C-terminal) with EPB42.

Its subcellular location is the cell membrane. The catalysed reaction is H2O(in) = H2O(out). It carries out the reaction nitric oxide(out) = nitric oxide(in). The enzyme catalyses CO2(out) = CO2(in). It catalyses the reaction glycerol(in) = glycerol(out). The catalysed reaction is H2O2(out) = H2O2(in). It carries out the reaction K(+)(in) = K(+)(out). The enzyme catalyses Na(+)(in) = Na(+)(out). In terms of biological role, forms a water channel that facilitates the transport of water across cell membranes, playing a crucial role in water homeostasis in various tissues. Could also be permeable to small solutes including hydrogen peroxide, glycerol and gases such as amonnia (NH3), nitric oxide (NO) and carbon dioxide (CO2). Recruited to the ankyrin-1 complex, a multiprotein complex of the erythrocyte membrane, it could be part of a CO2 metabolon, linking facilitated diffusion of CO2 across the membrane, anion exchange of Cl(-)/HCO3(-) and interconversion of dissolved CO2 and carbonic acid in the cytosol. In vitro, it shows non-selective gated cation channel activity and may be permeable to cations like K(+) and Na(+) in vivo. This Sus scrofa (Pig) protein is Aquaporin-1.